The primary structure comprises 1329 residues: BRCT domain-containing protein At4g02110 (1329 aa).

2 consecutive BRCT domains span residues 7 to 97 (LPPK…SILY) and 104 to 194 (NGIP…DYEI). Disordered regions lie at residues 295 to 378 (ANKT…SMER), 393 to 470 (GEEF…TSEL), 576 to 645 (EVPE…SPTD), 745 to 827 (NDVP…ADGK), and 952 to 1077 (AKKE…KESK). Polar residues-rich tracts occupy residues 323-335 (SLATYSRKTLQRS) and 363-378 (SAFNTSASKSGSSMER). 2 stretches are compositionally biased toward basic and acidic residues: residues 410–422 (VSRKDSLRVHHNS) and 600–611 (RMKDKQETELTT). Positions 793 to 802 (GKSRVKKTKI) are enriched in basic residues. Basic and acidic residues-rich tracts occupy residues 818–827 (DGGDNSADGK) and 971–983 (DDNKCKHGKEGIV). The span at 986 to 1004 (SSLQSGKKGSSSRVEVGKS) shows a compositional bias: low complexity. A compositionally biased stretch (basic and acidic residues) spans 1024–1047 (VMKDVGDNSAKEKENIAVDNESRK). The region spanning 1090–1181 (FQDQEHEPKF…KLLQEEPYEW (92 aa)) is the BRCT 3 domain.

The polypeptide is BRCT domain-containing protein At4g02110 (Arabidopsis thaliana (Mouse-ear cress)).